Reading from the N-terminus, the 605-residue chain is Protein kinase wis1 (605 aa).

Positions 1–20 (MSSPNNQPLSCSLRQLSISP) are enriched in polar residues. Residues 1–141 (MSSPNNQPLS…TPPGPFPGGL (141 aa)) form a disordered region. Composition is skewed to low complexity over residues 31–73 (GSLL…SSPS) and 90–105 (RLGR…SLNL). Positions 106-115 (DMKDPSEKPR) are enriched in basic and acidic residues. Ser-168 bears the Phosphoserine mark. A compositionally biased stretch (polar residues) spans 188 to 200 (SQLAGRLSNSPVK). Residues 188-263 (SQLAGRLSNS…PSSMASRRGL (76 aa)) form a disordered region. A compositionally biased stretch (low complexity) spans 244-256 (SNSNPTSPVSPSS). Ser-253 is modified (phosphoserine). A Protein kinase domain is found at 320–579 (IIKLEELGKG…YHELANHPWL (260 aa)). ATP is bound by residues 326–334 (LGKGNYGVV) and Lys-349. Asp-441 functions as the Proton acceptor in the catalytic mechanism. Residue Ser-469 is modified to Phosphoserine. A Phosphothreonine modification is found at Thr-473.

The protein belongs to the protein kinase superfamily. STE Ser/Thr protein kinase family. MAP kinase kinase subfamily. Dephosphorylated by pyp1 and pyp2.

The enzyme catalyses L-seryl-[protein] + ATP = O-phospho-L-seryl-[protein] + ADP + H(+). It carries out the reaction L-threonyl-[protein] + ATP = O-phospho-L-threonyl-[protein] + ADP + H(+). It catalyses the reaction L-tyrosyl-[protein] + ATP = O-phospho-L-tyrosyl-[protein] + ADP + H(+). Its function is as follows. Dosage-dependent regulator of mitosis with serine/ threonine protein kinase activity. May play a role in the integration of nutritional sensing with the control over entry into mitosis. It may interact with cdc25, wee1 and win1. May activate sty1. This Schizosaccharomyces pombe (strain 972 / ATCC 24843) (Fission yeast) protein is Protein kinase wis1 (wis1).